A 206-amino-acid polypeptide reads, in one-letter code: Holliday junction branch migration complex subunit RuvA (206 aa).

The tract at residues 1–67 (MIASIFGKIT…QILEEGFAFN (67 aa)) is domain I. Positions 68–141 (TLEEKEWFSK…YDRDDGGKRI (74 aa)) are domain II. A flexible linker region spans residues 141-145 (IKPNT). The interval 146 to 206 (AMANDYDEMF…QNNEVTNKTA (61 aa)) is domain III.

This sequence belongs to the RuvA family. Homotetramer. Forms an RuvA(8)-RuvB(12)-Holliday junction (HJ) complex. HJ DNA is sandwiched between 2 RuvA tetramers; dsDNA enters through RuvA and exits via RuvB. An RuvB hexamer assembles on each DNA strand where it exits the tetramer. Each RuvB hexamer is contacted by two RuvA subunits (via domain III) on 2 adjacent RuvB subunits; this complex drives branch migration. In the full resolvosome a probable DNA-RuvA(4)-RuvB(12)-RuvC(2) complex forms which resolves the HJ.

Its subcellular location is the cytoplasm. Its function is as follows. The RuvA-RuvB-RuvC complex processes Holliday junction (HJ) DNA during genetic recombination and DNA repair, while the RuvA-RuvB complex plays an important role in the rescue of blocked DNA replication forks via replication fork reversal (RFR). RuvA specifically binds to HJ cruciform DNA, conferring on it an open structure. The RuvB hexamer acts as an ATP-dependent pump, pulling dsDNA into and through the RuvAB complex. HJ branch migration allows RuvC to scan DNA until it finds its consensus sequence, where it cleaves and resolves the cruciform DNA. In Mycoplasma pneumoniae (strain ATCC 29342 / M129 / Subtype 1) (Mycoplasmoides pneumoniae), this protein is Holliday junction branch migration complex subunit RuvA.